The sequence spans 139 residues: Aspartate 1-decarboxylase (139 aa).

S25 functions as the Schiff-base intermediate with substrate; via pyruvic acid in the catalytic mechanism. S25 carries the post-translational modification Pyruvic acid (Ser). T57 provides a ligand contact to substrate. The active-site Proton donor is Y58. Position 73–75 (73–75) interacts with substrate; that stretch reads GAA.

This sequence belongs to the PanD family. As to quaternary structure, heterooctamer of four alpha and four beta subunits. Pyruvate is required as a cofactor. Post-translationally, is synthesized initially as an inactive proenzyme, which is activated by self-cleavage at a specific serine bond to produce a beta-subunit with a hydroxyl group at its C-terminus and an alpha-subunit with a pyruvoyl group at its N-terminus.

Its subcellular location is the cytoplasm. The catalysed reaction is L-aspartate + H(+) = beta-alanine + CO2. It functions in the pathway cofactor biosynthesis; (R)-pantothenate biosynthesis; beta-alanine from L-aspartate: step 1/1. Its function is as follows. Catalyzes the pyruvoyl-dependent decarboxylation of aspartate to produce beta-alanine. This is Aspartate 1-decarboxylase from Mycobacterium bovis (strain BCG / Tokyo 172 / ATCC 35737 / TMC 1019).